A 373-amino-acid polypeptide reads, in one-letter code: Flagellar P-ring protein (373 aa).

An N-terminal signal peptide occupies residues 1-26 (MRLLFRFLTLVAVLAMSLADVAPAWA).

Belongs to the FlgI family. As to quaternary structure, the basal body constitutes a major portion of the flagellar organelle and consists of four rings (L,P,S, and M) mounted on a central rod.

Its subcellular location is the periplasm. The protein resides in the bacterial flagellum basal body. In terms of biological role, assembles around the rod to form the L-ring and probably protects the motor/basal body from shearing forces during rotation. This is Flagellar P-ring protein from Rhizobium etli (strain CIAT 652).